Reading from the N-terminus, the 683-residue chain is Zinc finger protein 510 (683 aa).

Residues 46 to 117 (VSFKDVTIEF…EEEFSNQSHP (72 aa)) enclose the KRAB domain. The segment at 254–276 (FECNKIGKAFNDKANCVKHNSSH) adopts a C2H2-type 1; degenerate zinc-finger fold. 9 consecutive C2H2-type zinc fingers follow at residues 404 to 426 (YKCN…QRTH), 432 to 454 (FECS…QRIH), 460 to 482 (YKCN…QRIH), 488 to 510 (YECS…HRIH), 516 to 538 (FQCN…QRTH), 544 to 566 (YQCN…QKTH), 572 to 594 (FKCN…QRIH), 600 to 622 (FKCN…QRIH), and 628 to 650 (FQCN…QRTH).

This sequence belongs to the krueppel C2H2-type zinc-finger protein family.

It localises to the nucleus. Functionally, may be involved in transcriptional regulation. The protein is Zinc finger protein 510 (ZNF510) of Homo sapiens (Human).